Reading from the N-terminus, the 177-residue chain is Ribulose bisphosphate carboxylase small subunit, chloroplastic 2 (177 aa).

The transit peptide at 1–56 directs the protein to the chloroplast; it reads MASSMMASTAAVARAGPAQSNMVAPFNGLRSSVAFPATRKANKNLSTLPSNGGKVS.

The protein belongs to the RuBisCO small chain family. In terms of assembly, heterohexadecamer of 8 large and 8 small subunits.

It localises to the plastid. It is found in the chloroplast. Functionally, ruBisCO catalyzes two reactions: the carboxylation of D-ribulose 1,5-bisphosphate, the primary event in carbon dioxide fixation, as well as the oxidative fragmentation of the pentose substrate. Both reactions occur simultaneously and in competition at the same active site. Although the small subunit is not catalytic it is essential for maximal activity. This is Ribulose bisphosphate carboxylase small subunit, chloroplastic 2 from Lemna gibba (Swollen duckweed).